Reading from the N-terminus, the 192-residue chain is Cytidylate kinase (192 aa).

7-15 contacts ATP; that stretch reads GPPGAGKST.

Belongs to the cytidylate kinase family. Type 2 subfamily.

It is found in the cytoplasm. It carries out the reaction CMP + ATP = CDP + ADP. The catalysed reaction is dCMP + ATP = dCDP + ADP. The polypeptide is Cytidylate kinase (Haloquadratum walsbyi (strain DSM 16790 / HBSQ001)).